Consider the following 261-residue polypeptide: Lytic polysaccharide monooxygenase-like protein X325 (261 aa).

The first 17 residues, 1–17 (MQLSALALATLLATANA), serve as a signal peptide directing secretion. Positions 18, 64, and 133 each coordinate Cu(2+). 2 disulfide bridges follow: C39–C139 and C108–C155. N-linked (GlcNAc...) asparagine glycans are attached at residues N157 and N183. The segment at 174 to 210 (LAENTQGSGNSSGHAHGSSGSGSASASKTDSKSSAAS) is disordered. The segment covering 180–210 (GSGNSSGHAHGSSGSGSASASKTDSKSSAAS) has biased composition (low complexity). N238 is lipidated: GPI-anchor amidated asparagine. A propeptide spans 239-261 (SGSLAYVNGALAIGGVVAAALLI) (removed in mature form).

Belongs to the X325 family. Cu(2+) is required as a cofactor.

The protein localises to the cell membrane. Lytic polysaccharide monooxygenase-like protein that has diverged to biological functions other than polysaccharide degradation since it does not perform oxidative cleavage of polysaccharides. Acts as a cell surface-bound protein that functions in the copper-accumulation pathway. This Yarrowia lipolytica (strain CLIB 122 / E 150) (Yeast) protein is Lytic polysaccharide monooxygenase-like protein X325.